The chain runs to 1315 residues: Myopalladin (1315 aa).

Disordered stretches follow at residues 19 to 60, 81 to 145, 166 to 204, and 230 to 266; these read SYLA…DLPD, INHD…TQSK, HSSK…TERR, and EAKR…LGQP. Basic and acidic residues-rich tracts occupy residues 23 to 35 and 84 to 104; these read ETRH…RSRA and DPLE…DQTK. Phosphoserine occurs at positions 99 and 129. Positions 166–180 are enriched in basic residues; it reads HSSKRIRPRACKNHK. The span at 184-199 shows a compositional bias: polar residues; it reads ESQNKVLQENSPTFSD. Residues 219 to 240 adopt a coiled-coil conformation; sequence DNELNHAIEQREAKRREAELAA. Phosphothreonine is present on Thr-249. The 91-residue stretch at 267–357 folds into the Ig-like 1 domain; the sequence is PRFTQKLRSR…DSTSAEIYIE (91 aa). Cys-288 and Cys-339 are disulfide-bonded. The interval 359–392 is disordered; sequence VSSSDSEGDPNKEEMNRIQKPNEVSSPPTTSAAI. The Ig-like 2 domain maps to 432-528; that stretch reads PVFTKMLQNL…GTVSSIAQLD (97 aa). Cys-453 and Cys-512 are disulfide-bonded. Disordered regions lie at residues 535–652, 674–704, and 725–747; these read ISDN…VLAK, LQNT…SSKQ, and SSTS…NTPQ. Positions 609–623 are enriched in polar residues; the sequence is SSGSGAANTSQTRPN. Residue Ser-641 is modified to Phosphoserine. Over residues 725–741 the composition is skewed to low complexity; sequence SSTSTATVSPSSSPVFT. A Phosphoserine modification is found at Ser-754. Disordered stretches follow at residues 762–814 and 840–865; these read HPST…TPVS and NAMG…KAPQ. A compositionally biased stretch (pro residues) spans 779 to 790; sequence PAPPSPAEPAAP. Residues Ser-809 and Ser-814 each carry the phosphoserine modification. Residues Ser-903 and Ser-924 each carry the phosphoserine modification. 3 consecutive Ig-like domains span residues 941–1025, 1068–1157, and 1167–1257; these read PIFD…GRIS, PHFL…LELT, and PVIL…ARLD. The cysteines at positions 1089 and 1141 are disulfide-linked.

Belongs to the myotilin/palladin family. As to quaternary structure, interacts with TTN/titin, NEB, NEBL, ACTN2 and CARP.

The protein resides in the cytoplasm. It is found in the nucleus. The protein localises to the myofibril. Its subcellular location is the sarcomere. It localises to the z line. Its function is as follows. Component of the sarcomere that tethers together nebulin (skeletal muscle) and nebulette (cardiac muscle) to alpha-actinin, at the Z lines. The polypeptide is Myopalladin (Mypn) (Mus musculus (Mouse)).